The sequence spans 263 residues: Small ribosomal subunit protein eS4 (263 aa).

The S4 RNA-binding domain occupies 42–105 (LPLIIFLRNR…GENFRLIYDV (64 aa)).

The protein belongs to the eukaryotic ribosomal protein eS4 family. In terms of assembly, component of the small ribosomal subunit. Part of the small subunit (SSU) processome, composed of more than 70 proteins and the RNA chaperone small nucleolar RNA (snoRNA) U3.

Its subcellular location is the cytoplasm. The protein resides in the nucleus. It is found in the nucleolus. In terms of biological role, component of the small ribosomal subunit. The ribosome is a large ribonucleoprotein complex responsible for the synthesis of proteins in the cell. Part of the small subunit (SSU) processome, first precursor of the small eukaryotic ribosomal subunit. During the assembly of the SSU processome in the nucleolus, many ribosome biogenesis factors, an RNA chaperone and ribosomal proteins associate with the nascent pre-rRNA and work in concert to generate RNA folding, modifications, rearrangements and cleavage as well as targeted degradation of pre-ribosomal RNA by the RNA exosome. The sequence is that of Small ribosomal subunit protein eS4 (rps4x) from Danio rerio (Zebrafish).